Reading from the N-terminus, the 217-residue chain is U exon protein (217 aa).

Disordered regions lie at residues 79-113 (ISGE…GGRV) and 171-217 (KEAP…WQRR). Basic residues predominate over residues 188–197 (RGQRGRKRRC). The span at 202–217 (GGFQQPTGANQAWQRR) shows a compositional bias: polar residues.

This sequence belongs to the adenoviridae U exon protein family.

The protein resides in the host nucleus. The protein localises to the host nucleoplasm. It localises to the host nucleolus. Functionally, might play a role in viral replication since it is associated with viral replication centers. Seems to have an effect on DBP localization. This Human adenovirus C serotype 5 (HAdV-5) protein is U exon protein.